The chain runs to 382 residues: Mannitol-1-phosphate 5-dehydrogenase (382 aa).

Residue 3–14 (ALHFGAGNIGRG) participates in NAD(+) binding. K269 carries the N6-acetyllysine modification.

It belongs to the mannitol dehydrogenase family.

The enzyme catalyses D-mannitol 1-phosphate + NAD(+) = beta-D-fructose 6-phosphate + NADH + H(+). The polypeptide is Mannitol-1-phosphate 5-dehydrogenase (Escherichia coli O139:H28 (strain E24377A / ETEC)).